A 188-amino-acid chain; its full sequence is UPF0340 protein BH3766 (188 aa).

It belongs to the UPF0340 family.

The protein is UPF0340 protein BH3766 of Halalkalibacterium halodurans (strain ATCC BAA-125 / DSM 18197 / FERM 7344 / JCM 9153 / C-125) (Bacillus halodurans).